Consider the following 324-residue polypeptide: Phospho-N-acetylmuramoyl-pentapeptide-transferase (324 aa).

10 helical membrane passes run 5–25 (GLLV…PLFI), 52–72 (PTMG…IMAI), 77–97 (LGAE…IGFL), 122–142 (VIAI…YIMI), 149–169 (FELG…GSNA), 176–196 (LDGL…IIAV), 201–221 (FGVA…LVFN), 227–247 (VFMG…VAIL), 253–273 (LLVI…IQVI), and 302–322 (VVVT…YIGV).

It belongs to the glycosyltransferase 4 family. MraY subfamily. The cofactor is Mg(2+).

The protein resides in the cell membrane. The enzyme catalyses UDP-N-acetyl-alpha-D-muramoyl-L-alanyl-gamma-D-glutamyl-meso-2,6-diaminopimeloyl-D-alanyl-D-alanine + di-trans,octa-cis-undecaprenyl phosphate = di-trans,octa-cis-undecaprenyl diphospho-N-acetyl-alpha-D-muramoyl-L-alanyl-D-glutamyl-meso-2,6-diaminopimeloyl-D-alanyl-D-alanine + UMP. Its pathway is cell wall biogenesis; peptidoglycan biosynthesis. Functionally, catalyzes the initial step of the lipid cycle reactions in the biosynthesis of the cell wall peptidoglycan: transfers peptidoglycan precursor phospho-MurNAc-pentapeptide from UDP-MurNAc-pentapeptide onto the lipid carrier undecaprenyl phosphate, yielding undecaprenyl-pyrophosphoryl-MurNAc-pentapeptide, known as lipid I. This Bacillus mycoides (strain KBAB4) (Bacillus weihenstephanensis) protein is Phospho-N-acetylmuramoyl-pentapeptide-transferase.